The sequence spans 110 residues: Large ribosomal subunit protein uL22 (110 aa).

Belongs to the universal ribosomal protein uL22 family. In terms of assembly, part of the 50S ribosomal subunit.

Its function is as follows. This protein binds specifically to 23S rRNA; its binding is stimulated by other ribosomal proteins, e.g. L4, L17, and L20. It is important during the early stages of 50S assembly. It makes multiple contacts with different domains of the 23S rRNA in the assembled 50S subunit and ribosome. Functionally, the globular domain of the protein is located near the polypeptide exit tunnel on the outside of the subunit, while an extended beta-hairpin is found that lines the wall of the exit tunnel in the center of the 70S ribosome. This chain is Large ribosomal subunit protein uL22, found in Buchnera aphidicola subsp. Schizaphis graminum (strain Sg).